The primary structure comprises 162 residues: Ribosome maturation factor RimP (162 aa).

This sequence belongs to the RimP family.

Its subcellular location is the cytoplasm. Required for maturation of 30S ribosomal subunits. This Cupriavidus pinatubonensis (strain JMP 134 / LMG 1197) (Cupriavidus necator (strain JMP 134)) protein is Ribosome maturation factor RimP.